The following is a 600-amino-acid chain: Lamin-B2 (600 aa).

The tract at residues 2–27 (SGTPIRGTPGGTPLSPTRISRLQEKE) is head. Phosphoserine; by CDK1 is present on Ser16. One can recognise an IF rod domain in the interval 25–381 (EKEELRQLND…KLLEGEEERL (357 aa)). Residues 28–64 (ELRQLNDRLAVYIDRVRALELENDRLLVKISEKEEVT) are coil 1A. The interval 75–212 (YESELADARR…NVFEEEIRET (138 aa)) is coil 1B. The coil 2 stretch occupies residues 237-379 (QALEDLRNQH…YRKLLEGEEE (143 aa)). Disordered stretches follow at residues 377-449 (EEER…QMSQ) and 568-600 (ENEE…CLVM). Residues 380 to 600 (RLKLSPSPSS…RTTSRGCLVM (221 aa)) form a tail region. Residues 383-410 (LSPSPSSRVTVSRATSSSSSSSTSLVRS) are compositionally biased toward low complexity. Ser386 bears the Phosphoserine mark. A Nuclear localization signal motif is present at residues 414-419 (KRRRIE). Positions 445–562 (FQMSQQASAT…EEVAVRTVTK (118 aa)) constitute an LTD domain. Positions 569 to 583 (NEEEEDEADFGEEDL) are enriched in acidic residues. The span at 584–600 (FNQQGDPRTTSRGCLVM) shows a compositional bias: polar residues. Cys597 bears the Cysteine methyl ester mark. Cys597 carries the S-farnesyl cysteine lipid modification. Positions 598–600 (LVM) are cleaved as a propeptide — removed in mature form.

This sequence belongs to the intermediate filament family. As to quaternary structure, homodimer. Lamin dimers then assemble into dimeric head-to-tail polymers. Ultimately, two head-to-tail polymers assemble laterally into a protofilament with a uniformly shaped rod of 3.5 nm in diameter. In terms of processing, phosphorylation plays a key role in lamin organization, subcellular localization and nuclear envelope disintegration. Phosphorylation by CDK1 at Ser-16 at the onset of mitosis drives lamin disassembly and nuclear envelope breakdown.

It localises to the nucleus lamina. The protein localises to the nucleus envelope. It is found in the nucleus. Its subcellular location is the nucleoplasm. The protein resides in the nucleus matrix. Functionally, lamins are intermediate filament proteins that assemble into a filamentous meshwork, and which constitute the major components of the nuclear lamina, a fibrous layer on the nucleoplasmic side of the inner nuclear membrane. Lamins provide a framework for the nuclear envelope, bridging the nuclear envelope and chromatin. Plays an important role in nuclear assembly, chromatin organization, nuclear membrane and telomere dynamics. The chain is Lamin-B2 (LMNB2) from Gallus gallus (Chicken).